The following is a 306-amino-acid chain: MLSGLVIVDKPQGWTSHDVVGRMRRLAGTRKVGHAGTLDPMATGVLVLGINKATRLLTYIVGTSKTYTATIRLGESTVTDDAEGEVVSSHSAAAVTEGAIRAAVAALTGEIQQVPSSVSAIKVNGERAYARVRSGEDVKLAARPVTIHRFDVHAVRPERAGAVLDVDVTVECSSGTYIRALARDLGEALGTGGHLTALRRTQVGPYTLDQARTLEQLAEELEVLEMSQAARALMPNRELSEDEATEISFGRRIAAGAGAGTPEAATADNPAAAFAPDGSLVALLADAGGYAKPVLVFAPSNEQPGK.

Catalysis depends on Asp39, which acts as the Nucleophile.

The protein belongs to the pseudouridine synthase TruB family. Type 1 subfamily.

It catalyses the reaction uridine(55) in tRNA = pseudouridine(55) in tRNA. Responsible for synthesis of pseudouridine from uracil-55 in the psi GC loop of transfer RNAs. The sequence is that of tRNA pseudouridine synthase B from Arthrobacter sp. (strain FB24).